Consider the following 342-residue polypeptide: N-acetyl-gamma-glutamyl-phosphate reductase (342 aa).

The active site involves cysteine 149.

Belongs to the NAGSA dehydrogenase family. Type 1 subfamily.

It localises to the cytoplasm. The enzyme catalyses N-acetyl-L-glutamate 5-semialdehyde + phosphate + NADP(+) = N-acetyl-L-glutamyl 5-phosphate + NADPH + H(+). It functions in the pathway amino-acid biosynthesis; L-arginine biosynthesis; N(2)-acetyl-L-ornithine from L-glutamate: step 3/4. Catalyzes the NADPH-dependent reduction of N-acetyl-5-glutamyl phosphate to yield N-acetyl-L-glutamate 5-semialdehyde. This chain is N-acetyl-gamma-glutamyl-phosphate reductase, found in Aromatoleum aromaticum (strain DSM 19018 / LMG 30748 / EbN1) (Azoarcus sp. (strain EbN1)).